A 179-amino-acid polypeptide reads, in one-letter code: Ribosome maturation factor RimM (179 aa).

Residues 100-176 (KEEFHLLELI…FVIINPPNGL (77 aa)) enclose the PRC barrel domain.

Belongs to the RimM family. As to quaternary structure, binds ribosomal protein uS19.

It localises to the cytoplasm. An accessory protein needed during the final step in the assembly of 30S ribosomal subunit, possibly for assembly of the head region. Essential for efficient processing of 16S rRNA. May be needed both before and after RbfA during the maturation of 16S rRNA. It has affinity for free ribosomal 30S subunits but not for 70S ribosomes. This is Ribosome maturation factor RimM from Prochlorococcus marinus (strain MIT 9301).